Consider the following 572-residue polypeptide: Zyxin (572 aa).

A2 carries the N-acetylalanine modification. The disordered stretch occupies residues 23–351; that stretch reads QKKFGPVVAP…VRSPGAPGPL (329 aa). 2 stretches are compositionally biased toward pro residues: residues 63 to 78 and 93 to 108; these read IPPP…PPPL and FPPP…PPAP. A phosphoserine mark is found at S116, S142, S143, S169, and S170. The segment covering 143-156 has biased composition (low complexity); it reads SIDLEIDSLSSLLD. A Phosphothreonine modification is found at T179. Over residues 202–239 the composition is skewed to low complexity; it reads SPSSSQPLPQVPAPAQSQTQFHVQPQPQPKPQVQLHVQ. The segment covering 240–252 has biased composition (polar residues); that stretch reads SQTQPVSLANTQP. Asymmetric dimethylarginine is present on R253. A compositionally biased stretch (pro residues) spans 253-265; sequence RGPPASSPAPAPK. A Phosphoserine modification is found at S259. Residue K265 is modified to N6-acetyllysine. S267 is subject to Phosphoserine. A Phosphothreonine modification is found at T270. K272 bears the N6-acetyllysine mark. T274 carries the phosphothreonine modification. An N6-acetyllysine modification is found at K279. 3 positions are modified to phosphoserine: S281, S288, and S308. The segment covering 305-318 has biased composition (polar residues); it reads GTGSPQPPSFTYAQ. Residues 319–330 show a composition bias toward basic and acidic residues; that stretch reads QREKPRVQEKQH. Phosphoserine is present on S344. 3 LIM zinc-binding domains span residues 384–443, 444–503, and 504–570; these read CGRC…TLEK, CNTC…YAPR, and CSVC…TARA.

Belongs to the zyxin/ajuba family. Interacts with HPV type 6 protein E6. Does not interact significantly with E6 proteins from HPV types 11, 16, or 18. Interacts, via the Pro-rich regions, with the EVH1 domains of ENAH, EVL and VASP. Interacts with the first LIM domain of TES. Interacts with NEBL (isoform 2). Interacts with SYNPO2. As to quaternary structure, (Microbial infection) Interacts with human papillomavirus type 6/HPV6 protein E6. Does not interact significantly with E6 proteins from HPV types 11, 16, or 18.

The protein localises to the cytoplasm. The protein resides in the cytoskeleton. Its subcellular location is the nucleus. It localises to the cell junction. It is found in the focal adhesion. Adhesion plaque protein. Binds alpha-actinin and the CRP protein. Important for targeting TES and ENA/VASP family members to focal adhesions and for the formation of actin-rich structures. May be a component of a signal transduction pathway that mediates adhesion-stimulated changes in gene expression. The sequence is that of Zyxin (ZYX) from Homo sapiens (Human).